We begin with the raw amino-acid sequence, 196 residues long: DnaA initiator-associating protein DiaA (196 aa).

Residues 34-196 (MVQSLLNGNK…DNTLFPHQND (163 aa)) enclose the SIS domain.

The protein belongs to the SIS family. DiaA subfamily. In terms of assembly, homotetramer; dimer of dimers.

Its function is as follows. Required for the timely initiation of chromosomal replication via direct interactions with the DnaA initiator protein. The sequence is that of DnaA initiator-associating protein DiaA from Pectobacterium atrosepticum (strain SCRI 1043 / ATCC BAA-672) (Erwinia carotovora subsp. atroseptica).